We begin with the raw amino-acid sequence, 140 residues long: Nucleoside diphosphate kinase (140 aa).

6 residues coordinate ATP: lysine 11, phenylalanine 59, arginine 87, threonine 93, arginine 104, and asparagine 114. Histidine 117 acts as the Pros-phosphohistidine intermediate in catalysis.

It belongs to the NDK family. In terms of assembly, homotetramer. Requires Mg(2+) as cofactor.

Its subcellular location is the cytoplasm. The enzyme catalyses a 2'-deoxyribonucleoside 5'-diphosphate + ATP = a 2'-deoxyribonucleoside 5'-triphosphate + ADP. The catalysed reaction is a ribonucleoside 5'-diphosphate + ATP = a ribonucleoside 5'-triphosphate + ADP. Major role in the synthesis of nucleoside triphosphates other than ATP. The ATP gamma phosphate is transferred to the NDP beta phosphate via a ping-pong mechanism, using a phosphorylated active-site intermediate. In Bartonella henselae (strain ATCC 49882 / DSM 28221 / CCUG 30454 / Houston 1) (Rochalimaea henselae), this protein is Nucleoside diphosphate kinase.